A 1133-amino-acid polypeptide reads, in one-letter code: Early transcription factor large subunit homolog (1133 aa).

The region spanning 52–352 (KGGRAFFPCD…PNGQPLQRQQ (301 aa)) is the Helicase ATP-binding domain. Residue 99-106 (WQTGTGKS) coordinates ATP. The DEAH box motif lies at 281–284 (DEIH). Residues 524–724 (MMKDILSIIR…EGDKALRKHA (201 aa)) form the Helicase C-terminal domain.

This sequence belongs to the DEAD box helicase family. DEAH subfamily.

The protein localises to the virion. It catalyses the reaction ATP + H2O = ADP + phosphate + H(+). Putative initation factor. The sequence is that of Early transcription factor large subunit homolog from Ornithodoros (relapsing fever ticks).